A 367-amino-acid chain; its full sequence is Anthranilate phosphoribosyltransferase (367 aa).

Positions methionine 1–alanine 17 are enriched in low complexity. The segment at methionine 1–serine 22 is disordered. 5-phospho-alpha-D-ribose 1-diphosphate contacts are provided by residues glycine 104, glycine 107–aspartate 108, threonine 112, asparagine 114–threonine 117, lysine 132–serine 140, and glycine 144. Glycine 104 serves as a coordination point for anthranilate. Position 116 (serine 116) interacts with Mg(2+). Residue asparagine 135 coordinates anthranilate. Arginine 190 provides a ligand contact to anthranilate. Residues aspartate 248 and glutamate 249 each contribute to the Mg(2+) site.

It belongs to the anthranilate phosphoribosyltransferase family. Homodimer. Mg(2+) serves as cofactor.

It carries out the reaction N-(5-phospho-beta-D-ribosyl)anthranilate + diphosphate = 5-phospho-alpha-D-ribose 1-diphosphate + anthranilate. Its pathway is amino-acid biosynthesis; L-tryptophan biosynthesis; L-tryptophan from chorismate: step 2/5. Catalyzes the transfer of the phosphoribosyl group of 5-phosphorylribose-1-pyrophosphate (PRPP) to anthranilate to yield N-(5'-phosphoribosyl)-anthranilate (PRA). This is Anthranilate phosphoribosyltransferase from Mycobacterium marinum (strain ATCC BAA-535 / M).